The following is a 344-amino-acid chain: Lipase chaperone (344 aa).

A helical transmembrane segment spans residues 14–34 (AMVYGVVGLAAIAGVAMWSGA).

This sequence belongs to the lipase chaperone family.

The protein localises to the cell inner membrane. May be involved in the folding of the extracellular lipase during its passage through the periplasm. The chain is Lipase chaperone from Burkholderia lata (strain ATCC 17760 / DSM 23089 / LMG 22485 / NCIMB 9086 / R18194 / 383).